The chain runs to 596 residues: NADH-quinone oxidoreductase subunit C/D (596 aa).

Residues M1–E186 form an NADH dehydrogenase I subunit C region. Residues N210 to R596 are NADH dehydrogenase I subunit D.

It in the N-terminal section; belongs to the complex I 30 kDa subunit family. The protein in the C-terminal section; belongs to the complex I 49 kDa subunit family. In terms of assembly, NDH-1 is composed of 13 different subunits. Subunits NuoB, CD, E, F, and G constitute the peripheral sector of the complex.

Its subcellular location is the cell inner membrane. The enzyme catalyses a quinone + NADH + 5 H(+)(in) = a quinol + NAD(+) + 4 H(+)(out). NDH-1 shuttles electrons from NADH, via FMN and iron-sulfur (Fe-S) centers, to quinones in the respiratory chain. The immediate electron acceptor for the enzyme in this species is believed to be ubiquinone. Couples the redox reaction to proton translocation (for every two electrons transferred, four hydrogen ions are translocated across the cytoplasmic membrane), and thus conserves the redox energy in a proton gradient. This is NADH-quinone oxidoreductase subunit C/D from Blochmanniella pennsylvanica (strain BPEN).